The chain runs to 160 residues: UPF0225 protein PputW619_1140 (160 aa).

It belongs to the UPF0225 family.

The sequence is that of UPF0225 protein PputW619_1140 from Pseudomonas putida (strain W619).